We begin with the raw amino-acid sequence, 217 residues long: ATP phosphoribosyltransferase (217 aa).

The protein belongs to the ATP phosphoribosyltransferase family. Short subfamily. Heteromultimer composed of HisG and HisZ subunits.

It localises to the cytoplasm. The catalysed reaction is 1-(5-phospho-beta-D-ribosyl)-ATP + diphosphate = 5-phospho-alpha-D-ribose 1-diphosphate + ATP. It functions in the pathway amino-acid biosynthesis; L-histidine biosynthesis; L-histidine from 5-phospho-alpha-D-ribose 1-diphosphate: step 1/9. In terms of biological role, catalyzes the condensation of ATP and 5-phosphoribose 1-diphosphate to form N'-(5'-phosphoribosyl)-ATP (PR-ATP). Has a crucial role in the pathway because the rate of histidine biosynthesis seems to be controlled primarily by regulation of HisG enzymatic activity. This is ATP phosphoribosyltransferase from Burkholderia vietnamiensis (strain G4 / LMG 22486) (Burkholderia cepacia (strain R1808)).